Reading from the N-terminus, the 63-residue chain is Large ribosomal subunit protein bL32 (63 aa).

This sequence belongs to the bacterial ribosomal protein bL32 family.

This chain is Large ribosomal subunit protein bL32, found in Acholeplasma laidlawii.